We begin with the raw amino-acid sequence, 1512 residues long: MASAGPTGAGARPPKAFTAQAGLAKLVNPAGLNSILARGKEKFGGTQAWKELMGCDVIFARSISHWYGIKGTTYYELTVALGQPLYKPVTDPELTEEEKAVMTAVQSRFAQSNSSVVLTRTLLNKTCELKDRIRELTDELGQTEVHLAREKVKAAALKLENRKLFVENQELKDQLEKERTKHGWKGLKTLCLWIFLATLIGGYITGSNAACTLVDVPSPMKVGYDTFKQMCIHKDSYLPDGAFDKESLALECSKQMDYMDCKEVITDSISGKTSFAGMLRDVFRVDEIVTAIRTVVRFAMDFSLAYPICVMFVLILTRNKKHAIISACCALVAKCCGLRLLPFTLVLTYAPSETAIAGCIYGLGYISIPLVTFLHWVGLVLKAILVPDDCYIGTRVSHALAWSIMLPMWIITQELMAFTEFPLELQIVTTVVVCTAGFGFRYLTGTVTITEPDGTVKKYKRIFNAKSAIGTISTVFFEKAKAIRGVIPSFPSKADNIVKIEVDVDGGSAGVGFRLGNYIYTAGHVVGEAKIAKITWKGLTSQAKVLGHIELPLFTDTLARLEIPKPFQQLPVFRLAKSSENDYVQMVCFDNQLQNVVTFSGWANIDGDYLNAPFETYAGTSGSPIINRDGRMLGVHFGSNAVVSQGFVITRLFATEPAVKQCKSDEDLADEIVRKVMGGIRISFASLTSELEKQRDELNALKQMVNDLIDTDLVALEKKKGKTKRTVRGQKHKTKAISKAAFMKTKVLTEEEYRRLEEEGFTKDEIKDIVDNLREQAWLDYQNQLDEEGDDDWYEQMEEDQRINDQIDQNIERDLEDRGEWYGQRKITFKQRAMLRFIQLGRQQQVATVSFPDGYEDRAEELYNKVVTTEDLPEGETSEAALSLPNKIVHQAGKRLNFKHVKIHPDKTFMKSGVTQIEEKPEGDIILKAKTTTLAPKEEPVIQQVEQQPQVEQQQQPQQPVVEEKKRTPPPKPQRKPKTGAKAKCLDCGETFVERQDFHVCKSKKLNEPPSGGYTPVPDHLRWNNWQIYMEPLDLRITVPENYPILGHIAIDKLVERKKKVNDPLLKMLEQPKCEGFTSTTWTRKAYTKSFEKFDYGDAVDFVQDYPELTAFADAAVLAEVGYMEGTHVIPIQETSKNMDSTPAFPKMLDFDSERDYLEAHGMKEYIDTQLGVQSGKPLWWCFLKNEILKEKKVSEDDIRIITCSDPVITRLGASFDSEQNERMKERTETHHAQVGWTPFFGGLDKRVRRITSCGRTQVLELDWTRFDGTIPVQLFQRMRELRKFFLTRRSRRRYGKLLDWYNAQLTDRITLLPTGEVTHVKKGNPSGQFSTTVDNNLVNEWLTAFEFGYQHLENHGIIPTVRDYRANVDFLCYGDDRLLAFNPSFVNYDPQVTIDMYKNIFGMWVKPENIKLFDSPTGSSFCGFTLVKPHGQWVGVVNVNKLLQSLKTPTRRLPDLESLWGKLVSLKIMCYHSDPEAVSYLSNQIRRVEEYARAEGIELPEVGPDFYRKIW.

Transmembrane regions (helical) follow at residues 190 to 210, 295 to 315, 323 to 343, 360 to 380, and 399 to 419; these read LCLWIFLATLIGGYITGSNAA, VVRFAMDFSLAYPICVMFVLI, AIISACCALVAKCCGLRLLPF, IYGLGYISIPLVTFLHWVGLV, and ALAWSIMLPMWIITQELMAFT. Active-site charge relay system; for serine protease activity residues include histidine 524, aspartate 556, and serine 621. Tyrosine 753 is subject to O-(5'-phospho-RNA)-tyrosine. Residues 940-981 are disordered; that stretch reads PVIQQVEQQPQVEQQQQPQQPVVEEKKRTPPPKPQRKPKTGA. Residues 941 to 961 show a composition bias toward low complexity; the sequence is VIQQVEQQPQVEQQQQPQQPV. The RdRp catalytic domain maps to 1257-1390; it reads TQVLELDWTR…AFNPSFVNYD (134 aa).

This sequence belongs to the astroviridae polyprotein 1AB family. As to quaternary structure, monomer. Post-translationally, cleaved by the viral and host proteases. The protease is probably autocatalytically cleaved.

It localises to the host membrane. It carries out the reaction RNA(n) + a ribonucleoside 5'-triphosphate = RNA(n+1) + diphosphate. Functionally, responsible for the cleavage of the polyprotein into functional products. Its function is as follows. Protein covalently attached to the 5' extremity of the genomic and subgenomic RNAs. It may serve as a primer for the replicase. The sequence is that of Non-structural polyprotein 1AB (ORF1) from Gallus gallus (Chicken).